Here is a 356-residue protein sequence, read N- to C-terminus: sn-glycerol-3-phosphate import ATP-binding protein UgpC (356 aa).

Positions L4–I235 constitute an ABC transporter domain. G37 to S44 provides a ligand contact to ATP.

This sequence belongs to the ABC transporter superfamily. sn-glycerol-3-phosphate importer (TC 3.A.1.1.3) family. In terms of assembly, the complex is composed of two ATP-binding proteins (UgpC), two transmembrane proteins (UgpA and UgpE) and a solute-binding protein (UgpB).

It is found in the cell inner membrane. The catalysed reaction is sn-glycerol 3-phosphate(out) + ATP + H2O = sn-glycerol 3-phosphate(in) + ADP + phosphate + H(+). In terms of biological role, part of the ABC transporter complex UgpBAEC involved in sn-glycerol-3-phosphate (G3P) import. Responsible for energy coupling to the transport system. This chain is sn-glycerol-3-phosphate import ATP-binding protein UgpC, found in Salmonella typhi.